The following is a 455-amino-acid chain: uncharacterized protein (455 aa).

11 consecutive transmembrane segments (helical) span residues 26–46 (FGPGVVALGIIAAVTLLQLLI), 53–73 (GAWGAIASMWLGVHLVPISIG), 77–97 (LGVMPLLPVLLMVWATARSTA), 111–131 (WVVASALGGPLLMAAIALAVI), 146–166 (ALRAFTSVLVVHSVGAATGVW), 191–211 (AAGVLALLGLSGVVTAGSLVV), 232–252 (LTVLSVLYAPNVIVGTSAIAV), 256–276 (AHIGFATFSSFAVLGGDIPAL), 278–298 (ILAAAPTPPLGPAWVALLIVG), 323–343 (LLVAAVAGALVMAVLGYGGGG), and 357–377 (ALVLGVLFWFTFVGWVTVVIA). The interval 384–455 (PKRLRPAPPV…LSDEPPPRAD (72 aa)) is disordered.

The protein localises to the cell membrane. This is an uncharacterized protein from Mycobacterium tuberculosis (strain CDC 1551 / Oshkosh).